A 301-amino-acid chain; its full sequence is Rhodopsin (301 aa).

Topologically, residues 1 to 18 (LHMIHLHWYQYPPMNPIM) are extracellular. Residues 19 to 43 (YPLLLVFMLITGILCLAGNFVTIWV) traverse the membrane as a helical segment. The Cytoplasmic segment spans residues 44 to 55 (FMNTKSLRTPAN). The helical transmembrane segment at 56–78 (LLVVNLAMSDFLMMFTMFPPMMI) threads the bilayer. At 79–92 (TCYYHTWTLGATFC) the chain is on the extracellular side. Cys-92 and Cys-169 are oxidised to a cystine. Residues 93–115 (QVYAFLGNLCGCASIWTMVFITF) traverse the membrane as a helical segment. Positions 116-118 (DRY) match the 'Ionic lock' involved in activated form stabilization motif. At 116-134 (DRYNVIVKGVAGEPLSTKK) the chain is on the cytoplasmic side. A helical membrane pass occupies residues 135–155 (ATLWILTIWILSTTWCVAPFF). Residues 156 to 182 (GWNRYVPEGNLTGCGTDYLSQDILSRS) lie on the Extracellular side of the membrane. A glycan (N-linked (GlcNAc...) asparagine) is linked at Asn-165. Residues 183 to 204 (YLYIYSTWVYFLPLAITIYCYV) form a helical membrane-spanning segment. Residues 205 to 245 (VIIKAVAAHEKGMRDQAKKMGIKSLRNEEAQKTSAECRLAK) are Cytoplasmic-facing. Residues 246-267 (IAMTTVALWFIAWTPYLLINWV) traverse the membrane as a helical segment. The Extracellular portion of the chain corresponds to 268–278 (GMFARSYLSPV). The helical transmembrane segment at 279-300 (YTIWGYVFAKANAVYNPIVYAI) threads the bilayer. An N6-(retinylidene)lysine modification is found at Lys-288.

This sequence belongs to the G-protein coupled receptor 1 family. Opsin subfamily. Homodimer. Interacts with GNAQ. Contains one covalently linked retinal chromophore.

It localises to the cell projection. It is found in the rhabdomere membrane. Photoreceptor required for image-forming vision at low light intensity. Can use both retinal and 3-dehydroretinal as visual pigment. Light-induced isomerization of 11-cis to all-trans retinal triggers a conformational change that activates signaling via G-proteins. Signaling via GNAQ probably mediates the activation of phospholipase C. This chain is Rhodopsin (RHO), found in Orconectes australis (Southern cave crayfish).